Here is a 201-residue protein sequence, read N- to C-terminus: Small ribosomal subunit protein uS5 (201 aa).

The segment at 1-28 (MAGPQRRGSGAGGGERRDRKGRDGGAGA) is disordered. Basic and acidic residues predominate over residues 14 to 23 (GERRDRKGRD). An S5 DRBM domain is found at 34–97 (YVERVVAINR…EEAKKHFFKV (64 aa)).

It belongs to the universal ribosomal protein uS5 family. Part of the 30S ribosomal subunit. Contacts proteins S4 and S8.

Its function is as follows. With S4 and S12 plays an important role in translational accuracy. Functionally, located at the back of the 30S subunit body where it stabilizes the conformation of the head with respect to the body. In Streptomyces coelicolor (strain ATCC BAA-471 / A3(2) / M145), this protein is Small ribosomal subunit protein uS5.